The sequence spans 198 residues: Ribosome maturation factor RimM (198 aa).

In terms of domain architecture, PRC barrel spans Asp92 to Glu168. Residues Ala163 to Ser172 show a composition bias toward acidic residues. The interval Ala163–Pro198 is disordered.

Belongs to the RimM family. As to quaternary structure, binds ribosomal protein uS19.

Its subcellular location is the cytoplasm. In terms of biological role, an accessory protein needed during the final step in the assembly of 30S ribosomal subunit, possibly for assembly of the head region. Essential for efficient processing of 16S rRNA. May be needed both before and after RbfA during the maturation of 16S rRNA. It has affinity for free ribosomal 30S subunits but not for 70S ribosomes. This chain is Ribosome maturation factor RimM, found in Bradyrhizobium sp. (strain BTAi1 / ATCC BAA-1182).